A 128-amino-acid chain; its full sequence is Glycophorin-C (128 aa).

Positions methionine 1 to tryptophan 12 are enriched in polar residues. The interval methionine 1–arginine 48 is disordered. Over methionine 1–methionine 57 the chain is Extracellular. Serine 3 carries O-linked (GalNAc...) serine glycosylation. The O-linked (GalNAc...) threonine glycan is linked to threonine 4. Residue serine 6 is glycosylated (O-linked (GalNAc...) serine). A glycan (N-linked (GlcNAc...) asparagine) is linked at asparagine 8. Serine 9 is a glycosylation site (O-linked (GalNAc...) serine). A glycan (O-linked (GalNAc...) threonine) is linked at threonine 10. Residues serine 15, serine 24, and serine 26 are each glycosylated (O-linked (GalNAc...) serine). Positions methionine 22 to threonine 33 are enriched in low complexity. 5 O-linked (GalNAc...) threonine glycosylation sites follow: threonine 27, threonine 28, threonine 31, threonine 32, and threonine 33. Serine 42 carries an O-linked (GalNAc...) serine glycan. The helical; Signal-anchor for type III membrane protein transmembrane segment at aspartate 58 to leucine 81 threads the bilayer. Residues arginine 82 to isoleucine 128 lie on the Cytoplasmic side of the membrane. A phosphoserine mark is found at serine 104 and serine 122. The tract at residues alanine 108 to isoleucine 128 is disordered.

Belongs to the glycophorin-C family. Post-translationally, O-glycosylated with core 1 or possibly core 8 glycans. Glycophorin-C is expressed in erythrocytes. Glycophorin-D and IsoGPC are ubiquitously expressed.

It localises to the cell membrane. This protein is a minor sialoglycoprotein in human erythrocyte membranes. The blood group Gerbich antigens and receptors for Plasmodium falciparum merozoites are most likely located within the extracellular domain. Glycophorin-C plays an important role in regulating the stability of red cells. The polypeptide is Glycophorin-C (GYPC) (Homo sapiens (Human)).